We begin with the raw amino-acid sequence, 546 residues long: ATP-dependent RNA helicase DBP2 (546 aa).

The interval 1–56 (MTYGGRDQQYNKTNYKSRGGDFRGGRNSDRNSYNDRPQGGNYRGGFGGRSNYNQPQ) is disordered. Omega-N-methylarginine is present on residues Arg-18 and Arg-43. Over residues 18-33 (RGGDFRGGRNSDRNSY) the composition is skewed to basic and acidic residues. Phosphoserine is present on residues Ser-88 and Ser-90. The short motif at 113 to 141 (TTFDEAGFPDYVLNEVKAEGFDKPTGIQC) is the Q motif element. Residues 144-319 (WPMALSGRDM…ADYLNDPIQV (176 aa)) enclose the Helicase ATP-binding domain. 157–164 (AATGSGKT) provides a ligand contact to ATP. The DEAD box motif lies at 267–270 (DEAD). One can recognise a Helicase C-terminal domain in the interval 347–494 (RLNKYLETAS…NIPPELLKYD (148 aa)). Residue Lys-474 forms a Glycyl lysine isopeptide (Lys-Gly) (interchain with G-Cter in ubiquitin) linkage. The tract at residues 493–546 (YDRRSYGGGHPRYGGGRGGRGGYGRRGGYGGGRGGYGGNRQRDGGWGNRGRSNY) is disordered. Residues 498–540 (YGGGHPRYGGGRGGRGGYGRRGGYGGGRGGYGGNRQRDGGWGN) are compositionally biased toward gly residues. An RNA-binding RGG-box region spans residues 505-530 (YGGGRGGRGGYGRRGGYGGGRGGYGG). Arg-509, Arg-512, Arg-518, and Arg-525 each carry dimethylated arginine; alternate. Arg-509, Arg-512, Arg-518, and Arg-525 each carry omega-N-methylarginine; alternate.

This sequence belongs to the DEAD box helicase family. DDX5/DBP2 subfamily. Interacts with UPF1. Associates with polysomes.

The protein localises to the cytoplasm. The protein resides in the nucleus. It catalyses the reaction ATP + H2O = ADP + phosphate + H(+). ATP-dependent RNA helicase involved nonsense-mediated mRNA decay and ribosome biogenesis through rRNA processing. Associates directly with chromatin, correlating with transcriptional activity. Required for assembly of mRNA-binding proteins YRA1, NAB2, and MEX67 onto poly(A)+ RNA. The chain is ATP-dependent RNA helicase DBP2 from Saccharomyces cerevisiae (strain ATCC 204508 / S288c) (Baker's yeast).